The following is a 348-amino-acid chain: Alternative squalene epoxidase (348 aa).

The segment covering 1 to 10 has biased composition (basic and acidic residues); that stretch reads MLVDRVENNE. Residues 1–26 are disordered; sequence MLVDRVENNEKQQQQMASSSDAMSDS. Residues 12-26 are compositionally biased toward low complexity; the sequence is QQQQMASSSDAMSDS. A run of 3 helical transmembrane segments spans residues 55–75, 105–125, and 153–173; these read AIAW…LLLS, LGLV…WIFF, and GLLT…YLAI. In terms of domain architecture, Fatty acid hydroxylase spans 197 to 332; the sequence is FMCLVLQDGI…FMWFDQLGGT (136 aa). Positions 211 to 215 match the Histidine box-1 motif; the sequence is HVLEH. Residues 226–230 carry the Histidine box-2 motif; it reads HKPHH. The next 2 helical transmembrane spans lie at 243 to 263 and 277 to 297; these read GSLM…ANLV and SYAC…DGIF. The Histidine box-3 signature appears at 308–312; sequence HHVHH.

It belongs to the sterol desaturase family. In terms of assembly, interacts with cytochrome b5/PHATRDRAFT_30770. The cofactor is Fe cation.

It localises to the endoplasmic reticulum membrane. The enzyme catalyses squalene + 2 Fe(II)-[cytochrome b5] + O2 + 2 H(+) = (S)-2,3-epoxysqualene + 2 Fe(III)-[cytochrome b5] + H2O. The protein operates within terpene metabolism; lanosterol biosynthesis; lanosterol from farnesyl diphosphate. Its activity is regulated as follows. The activity of this enzyme is not inhibited by terbinafine, an established inhibitor of the conventional flavoprotein squalene epoxidase. Functionally, catalyzes the stereospecific epoxidation of squalene at the terminal double bond to form (S)-2,3-epoxysqualene, the first oxygenation step in sterol biosynthesis. The protein is Alternative squalene epoxidase of Phaeodactylum tricornutum (strain CCAP 1055/1).